Consider the following 124-residue polypeptide: Small ribosomal subunit protein uS13c (124 aa).

The interval 100–124 is disordered; the sequence is GQRTRTNARTRKGKVKTAVAKKKGR. The span at 101–124 shows a compositional bias: basic residues; sequence QRTRTNARTRKGKVKTAVAKKKGR.

Belongs to the universal ribosomal protein uS13 family. Part of the 30S ribosomal subunit.

The protein localises to the plastid. It is found in the chloroplast. Functionally, located at the top of the head of the 30S subunit, it contacts several helices of the 16S rRNA. This Emiliania huxleyi (Coccolithophore) protein is Small ribosomal subunit protein uS13c.